Here is an 80-residue protein sequence, read N- to C-terminus: Serine palmitoyltransferase-regulating protein TSC3 (80 aa).

Residues 54 to 74 traverse the membrane as a helical segment; the sequence is FDSFFLHVFFLTIFSLSFFGI.

In terms of assembly, interacts with the serine palmitoyltransferase complex LCB1-LCB2. Component of the SPOTS complex, at least composed of LCB1/2 (LCB1 and/or LCB2), ORM1/2 (ORM1 and/or ORM2), SAC1 and TSC3.

Its subcellular location is the endoplasmic reticulum membrane. In terms of biological role, stimulates the activity of serine palmitoyltransferase (SPT), and thus plays a role in the biosynthesis of sphingolipids. The sequence is that of Serine palmitoyltransferase-regulating protein TSC3 (TSC3) from Saccharomyces cerevisiae (strain ATCC 204508 / S288c) (Baker's yeast).